A 504-amino-acid polypeptide reads, in one-letter code: MSHSSLSWLSNFNVETVPSKYLRRSSIIGTIGPKTNNVDVLVKLRKAGLNVVRMNFSHGSYEYHQSVIDNARKSEEVYKGRPLAIALDTKGPEIRTGTTIGDKDYPIPPNHEMIFTTDDAYKTKCDDKVMYIDYKNITKVIAPGKIIYVDDGVLSFEVISVDDEQTLKVRSLNAGKISSHKGVNLPGTDVDLPALSEKDIADIKFGVKNKVHMIFASFIRTANDVLEIRKVLGEEGKDIQIISKIENQQGVNNFDEILEVTDGVMVARGDLGIEIPAPQVFVVQKQLIAKCNLAAKPVICATQMLESMTYNPRPTRAEVSDVGNAILDGADCVMLSGETAKGNYPVEAVSMMHNTCLTAEKAIAYPQLFNELRSLAKKPTATTETCAVAAVSAAYEQDAKAIVVLSTSGLSARLVSKYKPDVPILMVTRNERAAKFSHLYRGVYPFIYDKPSIENWQEDVENRLRWAVSEAVELGIISKGDSIVTVQGWTRGSGHSNTVRIVQA.

R53 contributes to the substrate binding site. Positions 55, 57, 88, and 89 each coordinate K(+). 55-58 is a binding site for ATP; sequence NFSH. The ATP site is built by R95 and K181. E246 lines the Mg(2+) pocket. Positions 269, 270, and 302 each coordinate substrate. Residue D270 participates in Mg(2+) binding.

Belongs to the pyruvate kinase family. As to quaternary structure, homotetramer. Requires Mg(2+) as cofactor. The cofactor is K(+).

Its subcellular location is the cytoplasm. The catalysed reaction is pyruvate + ATP = phosphoenolpyruvate + ADP + H(+). It participates in carbohydrate degradation; glycolysis; pyruvate from D-glyceraldehyde 3-phosphate: step 5/5. This Candida albicans (strain SC5314 / ATCC MYA-2876) (Yeast) protein is Pyruvate kinase (CDC19).